The sequence spans 145 residues: Transcription antitermination protein NusB (145 aa).

Belongs to the NusB family.

Its function is as follows. Involved in transcription antitermination. Required for transcription of ribosomal RNA (rRNA) genes. Binds specifically to the boxA antiterminator sequence of the ribosomal RNA (rrn) operons. This Ruminiclostridium cellulolyticum (strain ATCC 35319 / DSM 5812 / JCM 6584 / H10) (Clostridium cellulolyticum) protein is Transcription antitermination protein NusB.